A 550-amino-acid polypeptide reads, in one-letter code: Kinase suppressor of Ras B (550 aa).

Low complexity-rich tracts occupy residues 21 to 56 and 63 to 75; these read SFSSWRRSSTSGSISQSSRTTSKTTTSSSVTSSNPI and ATSSSSVLPSTSS. The tract at residues 21–87 is disordered; the sequence is SFSSWRRSST…PPPASAPPRI (67 aa). The Phorbol-ester/DAG-type zinc-finger motif lies at 90 to 145; it reads YHKMVPSKSKFRQCDVCEHIFIFDFVRKQHLDDVYACNVCGIRVHKGCLDRVKNDC. The segment at 172 to 196 is disordered; sequence TTASISKSLTTSPTCSTSTTMSPAG. Residues 177–193 show a composition bias toward low complexity; the sequence is SKSLTTSPTCSTSTTMS. One can recognise a Protein kinase domain in the interval 248–528; that stretch reads VDVMTKIGDG…FQQIVKRITV (281 aa). The disordered stretch occupies residues 530–550; sequence MPRKESNKQKRRSTAHENPLF.

Belongs to the protein kinase superfamily. TKL Ser/Thr protein kinase family. As to quaternary structure, interacts with ndk-1.

In terms of biological role, probable inactive protein kinase which positively regulates Ras-mediated signaling probably acting at the level of let-60/ras or/and lin-45/raf. In the germline, regulates meiotic progression during oogenesis and mpk-1 (isoform b) phosphorylation. Plays a role in meiotic recombination events. Functions redundantly with ksr-1 in the Ras-mediated regulation of larval survival, the development of excretory canal, in determining vulval precursor cell fate during vulval induction and in mpk-1 phosphorylation in somatic cells. In Caenorhabditis elegans, this protein is Kinase suppressor of Ras B.